Reading from the N-terminus, the 378-residue chain is tRNA (guanine(26)-N(2))-dimethyltransferase (378 aa).

One can recognise a Trm1 methyltransferase domain in the interval 4–374; it reads KEVTEGKVRI…KGYEEIIRCV (371 aa). Residues R44, R69, D87, D114, and A115 each coordinate S-adenosyl-L-methionine. C246, C249, C263, and C266 together coordinate Zn(2+).

It belongs to the class I-like SAM-binding methyltransferase superfamily. Trm1 family.

The catalysed reaction is guanosine(26) in tRNA + 2 S-adenosyl-L-methionine = N(2)-dimethylguanosine(26) in tRNA + 2 S-adenosyl-L-homocysteine + 2 H(+). In terms of biological role, dimethylates a single guanine residue at position 26 of a number of tRNAs using S-adenosyl-L-methionine as donor of the methyl groups. The sequence is that of tRNA (guanine(26)-N(2))-dimethyltransferase from Saccharolobus islandicus (strain M.14.25 / Kamchatka #1) (Sulfolobus islandicus).